The chain runs to 480 residues: Proline--tRNA ligase (480 aa).

This sequence belongs to the class-II aminoacyl-tRNA synthetase family. ProS type 3 subfamily. Homodimer.

The protein resides in the cytoplasm. The enzyme catalyses tRNA(Pro) + L-proline + ATP = L-prolyl-tRNA(Pro) + AMP + diphosphate. Its function is as follows. Catalyzes the attachment of proline to tRNA(Pro) in a two-step reaction: proline is first activated by ATP to form Pro-AMP and then transferred to the acceptor end of tRNA(Pro). In Pyrococcus abyssi (strain GE5 / Orsay), this protein is Proline--tRNA ligase.